The sequence spans 358 residues: DnaJ homolog subfamily B member 11 (358 aa).

The N-terminal stretch at 1 to 22 (MAPQNLSTFCLLLLYLIGAVIA) is a signal peptide. In terms of domain architecture, J spans 25–90 (DFYKILGVPR…EKRKQYDTYG (66 aa)). Threonine 188 is subject to Phosphothreonine. N-linked (GlcNAc...) asparagine glycosylation occurs at asparagine 261.

Part of a large chaperone multiprotein complex comprising DNAJB11, HSP90B1, HSPA5, HYOU, PDIA2, PDIA4, PDIA6, PPIB, SDF2L1, UGGT1 and very small amounts of ERP29, but not, or at very low levels, CALR nor CANX. Binds to denatured substrates in an ATP-independent manner. Interacts via the J domain with HSPA5 in an ATP-dependent manner. Post-translationally, contains high-mannose Endo H-sensitive carbohydrates. Cys-169, Cys-171, Cys-193 and Cys-196 form intramolecular disulfide bonds. The preferential partner for each Cys is not known.

The protein localises to the endoplasmic reticulum lumen. Functionally, as a co-chaperone for HSPA5 it is required for proper folding, trafficking or degradation of proteins. Binds directly to both unfolded proteins that are substrates for ERAD and nascent unfolded peptide chains, but dissociates from the HSPA5-unfolded protein complex before folding is completed. May help recruiting HSPA5 and other chaperones to the substrate. Stimulates HSPA5 ATPase activity. It is necessary for maturation and correct trafficking of PKD1. This is DnaJ homolog subfamily B member 11 (Dnajb11) from Rattus norvegicus (Rat).